Consider the following 101-residue polypeptide: Putative UPF0377 protein YBL108W (101 aa).

Belongs to the UPF0377 family.

The polypeptide is Putative UPF0377 protein YBL108W (Saccharomyces cerevisiae (strain ATCC 204508 / S288c) (Baker's yeast)).